Reading from the N-terminus, the 172-residue chain is Adenine phosphoribosyltransferase (172 aa).

It belongs to the purine/pyrimidine phosphoribosyltransferase family. As to quaternary structure, homodimer.

The protein resides in the cytoplasm. The enzyme catalyses AMP + diphosphate = 5-phospho-alpha-D-ribose 1-diphosphate + adenine. The protein operates within purine metabolism; AMP biosynthesis via salvage pathway; AMP from adenine: step 1/1. Catalyzes a salvage reaction resulting in the formation of AMP, that is energically less costly than de novo synthesis. This chain is Adenine phosphoribosyltransferase, found in Crocosphaera subtropica (strain ATCC 51142 / BH68) (Cyanothece sp. (strain ATCC 51142)).